Consider the following 215-residue polypeptide: MVSLEARVREVKGKREARRLRRRGEVPAVVYGPATEPIPVKIKRSVLEKIFHTISEATPIQLIIKDDQGNTVAEKTVFLKMVQRDKVSETVVHLDFYEPTKGHRMRINVPLKVVGKPVGVEKGGFLEVFHEEIPVETDPDKVPQEIEVDVSSLDLGDVIHARDLKLPEGVKCLLEEEEAVVSVLVPKEVAIEEATEEEEEAAEPEVIKRKEEEEE.

Acidic residues predominate over residues 192–203; the sequence is EEATEEEEEAAE. A disordered region spans residues 192–215; that stretch reads EEATEEEEEAAEPEVIKRKEEEEE. Residues 205-215 are compositionally biased toward basic and acidic residues; sequence EVIKRKEEEEE.

Belongs to the bacterial ribosomal protein bL25 family. CTC subfamily. In terms of assembly, part of the 50S ribosomal subunit; part of the 5S rRNA/L5/L18/L25 subcomplex. Contacts the 5S rRNA. Binds to the 5S rRNA independently of L5 and L18.

Functionally, this is one of the proteins that binds to the 5S RNA in the ribosome where it forms part of the central protuberance. The polypeptide is Large ribosomal subunit protein bL25 (Thermotoga maritima (strain ATCC 43589 / DSM 3109 / JCM 10099 / NBRC 100826 / MSB8)).